Here is a 298-residue protein sequence, read N- to C-terminus: ADP/ATP translocase 1 (298 aa).

The Mitochondrial intermembrane segment spans residues Met1 to Ser7. Gly2 carries the N-acetylglycine modification. Residues Trp6 to Leu98 form a Solcar 1 repeat. A Phosphoserine modification is found at Ser7. A helical membrane pass occupies residues Phe8 to Gln37. Over Val38–Asn74 the chain is Mitochondrial matrix. Lys52 bears the N6,N6,N6-trimethyllysine mark. The helical transmembrane segment at Leu75–Phe99 threads the bilayer. Residues Arg80 and Lys92 each coordinate ADP. The Mitochondrial intermembrane segment spans residues Leu100–Phe109. Residues Trp110–Phe130 form a helical membrane-spanning segment. Solcar repeat units lie at residues Arg111–Met201 and Val212–Tyr297. The Mitochondrial matrix segment spans residues Val131–Asn178. Lys147 carries the N6-succinyllysine modification. Cys160 bears the S-nitrosocysteine mark. Residues Val179–Lys199 form a helical membrane-spanning segment. Over Gly200–Ile210 the chain is Mitochondrial intermembrane. The helical transmembrane segment at Phe211–Phe231 threads the bilayer. Over Asp232–Gly273 the chain is Mitochondrial matrix. Arg235 serves as a coordination point for ADP. An important for transport activity region spans residues Arg235–Met240. The Nucleotide carrier signature motif motif lies at Arg235–Met240. N6-succinyllysine is present on residues Lys245 and Lys272. A helical transmembrane segment spans residues Ala274–Tyr291. The Mitochondrial intermembrane portion of the chain corresponds to Asp292–Val298.

The protein belongs to the mitochondrial carrier (TC 2.A.29) family. As to quaternary structure, monomer. Found in a complex with ARL2, ARL2BP and SLC25A4/ANT1. Interacts with ARL2BP. Interacts with ARHGAP11B, thereby inhibiting the mitochondrial permeability transition pore (mPTP). Interacts with TIMM44; leading to inhibit the presequence translocase TIMM23, thereby promoting stabilization of PINK1. In terms of assembly, (Microbial infection) Interacts with HIV-1 Vpr. In terms of processing, under cell death induction, transglutaminated by TGM2. Transglutamination leads to formation of covalent cross-links between a glutamine and the epsilon-amino group of a lysine residue, forming polymers. As to expression, expressed in erythrocytes (at protein level).

It is found in the mitochondrion inner membrane. The protein localises to the membrane. It carries out the reaction ADP(in) + ATP(out) = ADP(out) + ATP(in). It catalyses the reaction H(+)(in) = H(+)(out). With respect to regulation, the matrix-open state (m-state) is inhibited by the membrane-permeable bongkrekic acid (BKA). The cytoplasmic-open state (c-state) is inhibited by the membrane-impermeable toxic inhibitor carboxyatractyloside (CATR). Proton transporter activity is inhibited by ADP:ATP antiporter activity. Functionally, ADP:ATP antiporter that mediates import of ADP into the mitochondrial matrix for ATP synthesis, and export of ATP out to fuel the cell. Cycles between the cytoplasmic-open state (c-state) and the matrix-open state (m-state): operates by the alternating access mechanism with a single substrate-binding site intermittently exposed to either the cytosolic (c-state) or matrix (m-state) side of the inner mitochondrial membrane. In addition to its ADP:ATP antiporter activity, also involved in mitochondrial uncoupling and mitochondrial permeability transition pore (mPTP) activity. Plays a role in mitochondrial uncoupling by acting as a proton transporter: proton transport uncouples the proton flows via the electron transport chain and ATP synthase to reduce the efficiency of ATP production and cause mitochondrial thermogenesis. Proton transporter activity is inhibited by ADP:ATP antiporter activity, suggesting that SLC25A4/ANT1 acts as a master regulator of mitochondrial energy output by maintaining a delicate balance between ATP production (ADP:ATP antiporter activity) and thermogenesis (proton transporter activity). Proton transporter activity requires free fatty acids as cofactor, but does not transport it. Also plays a key role in mPTP opening, a non-specific pore that enables free passage of the mitochondrial membranes to solutes of up to 1.5 kDa, and which contributes to cell death. It is however unclear if SLC25A4/ANT1 constitutes a pore-forming component of mPTP or regulates it. Acts as a regulator of mitophagy independently of ADP:ATP antiporter activity: promotes mitophagy via interaction with TIMM44, leading to inhibit the presequence translocase TIMM23, thereby promoting stabilization of PINK1. The protein is ADP/ATP translocase 1 of Homo sapiens (Human).